The chain runs to 806 residues: Exonuclease 1 (806 aa).

Residues 1 to 99 (MGIQGLLQFI…KSRRERRQAN (99 aa)) form an N-domain region. Mg(2+) is bound by residues D30, D78, E150, D152, D171, D173, and D225. The tract at residues 138-229 (RTRGVDCVVA…ILSGCDYLQS (92 aa)) is I-domain. Disordered regions lie at residues 337-426 (RIDD…EDTS), 443-475 (HCPETQPTTKPLTNDNKVSKENHCGSTSGPFRP), and 512-754 (ETQE…SPGL). Polar residues predominate over residues 355 to 378 (RSSSWNDRCDKTATTQASIWSQNY). The segment covering 412 to 425 (PQRESQVKRPREDT) has biased composition (basic and acidic residues). Composition is skewed to polar residues over residues 447–458 (TQPTTKPLTNDN), 533–542 (SQSGGDTSSL), and 578–589 (WSGTTKELNKSV). Basic and acidic residues predominate over residues 592–601 (PARDSTERQR). Positions 602–615 (SSSTPSGLSTLQQF) are enriched in polar residues. Residues 651-670 (SQDSAYFSQSSSISASVENS) show a composition bias toward low complexity. Positions 676–685 (NSDKEKERDS) are enriched in basic and acidic residues. The segment covering 686-696 (VVSNSPSSSPL) has biased composition (low complexity). The span at 744–754 (KNVNNENSPGL) shows a compositional bias: polar residues.

Belongs to the XPG/RAD2 endonuclease family. EXO1 subfamily. Mg(2+) serves as cofactor.

It is found in the nucleus. 5'-&gt;3' double-stranded DNA exonuclease which may also contain a cryptic 3'-&gt;5' double-stranded DNA exonuclease activity. Also exhibits endonuclease activity against 5'-overhanging flap structures similar to those generated by displacement synthesis when DNA polymerase encounters the 5'-end of a downstream Okazaki fragment. Required for DNA mismatch repair (MMR). This Danio rerio (Zebrafish) protein is Exonuclease 1 (exo1).